The primary structure comprises 193 residues: Phosphoheptose isomerase (193 aa).

Residues 37-193 (LADSFKAGGK…QLIEKEMVKA (157 aa)) enclose the SIS domain. 52 to 54 (NGG) contacts substrate. 2 residues coordinate Zn(2+): His61 and Glu65. Substrate is bound by residues Glu65, 93-94 (ND), 119-121 (STS), Ser124, and Gln172. 2 residues coordinate Zn(2+): Gln172 and His180.

It belongs to the SIS family. GmhA subfamily. As to quaternary structure, homotetramer. Requires Zn(2+) as cofactor.

The protein localises to the cytoplasm. The enzyme catalyses 2 D-sedoheptulose 7-phosphate = D-glycero-alpha-D-manno-heptose 7-phosphate + D-glycero-beta-D-manno-heptose 7-phosphate. It functions in the pathway carbohydrate biosynthesis; D-glycero-D-manno-heptose 7-phosphate biosynthesis; D-glycero-alpha-D-manno-heptose 7-phosphate and D-glycero-beta-D-manno-heptose 7-phosphate from sedoheptulose 7-phosphate: step 1/1. In terms of biological role, catalyzes the isomerization of sedoheptulose 7-phosphate in D-glycero-D-manno-heptose 7-phosphate. The chain is Phosphoheptose isomerase from Serratia proteamaculans (strain 568).